We begin with the raw amino-acid sequence, 192 residues long: Adenylate kinase (192 aa).

10–18 serves as a coordination point for ATP; it reads GVPGVGGTT.

Belongs to the archaeal adenylate kinase family. As to quaternary structure, monomer.

It localises to the cytoplasm. It catalyses the reaction AMP + ATP = 2 ADP. The sequence is that of Adenylate kinase from Methanococcus maripaludis (strain DSM 14266 / JCM 13030 / NBRC 101832 / S2 / LL).